Consider the following 346-residue polypeptide: D-fructose 1,6-bisphosphatase class 2/sedoheptulose 1,7-bisphosphatase 1 (346 aa).

Mn(2+) is bound by residues Asp33, Glu57, Asp97, and Glu100. Substrate contacts are provided by residues Glu100–Thr102, Tyr131, Arg176–Arg178, and Asp198–Asp200. Glu225 serves as a coordination point for Mn(2+).

It belongs to the FBPase class 2 family. Homotetramer. Mn(2+) is required as a cofactor.

The enzyme catalyses beta-D-fructose 1,6-bisphosphate + H2O = beta-D-fructose 6-phosphate + phosphate. It carries out the reaction D-sedoheptulose 1,7-bisphosphate + H2O = D-sedoheptulose 7-phosphate + phosphate. It functions in the pathway carbohydrate biosynthesis; Calvin cycle. Functionally, catalyzes the hydrolysis of fructose 1,6-bisphosphate (Fru 1,6-P2) and sedoheptulose 1,7-bisphosphate (Sed 1,7-P2) to fructose 6-phosphate and sedoheptulose 7-phosphate, respectively. The polypeptide is D-fructose 1,6-bisphosphatase class 2/sedoheptulose 1,7-bisphosphatase 1 (Acaryochloris marina (strain MBIC 11017)).